Here is an 804-residue protein sequence, read N- to C-terminus: Phenylalanine--tRNA ligase beta subunit (804 aa).

The 114-residue stretch at 40–153 (PLPDLRVVVG…SSYAVGEPFA (114 aa)) folds into the tRNA-binding domain. A B5 domain is found at 400-476 (PALLVLPFRP…RLHGYDNIEA (77 aa)). D454, D460, E463, and E464 together coordinate Mg(2+). The FDX-ACB domain occupies 710 to 802 (SKFPAVQRDL…AESKLGAVIR (93 aa)).

The protein belongs to the phenylalanyl-tRNA synthetase beta subunit family. Type 1 subfamily. Tetramer of two alpha and two beta subunits. It depends on Mg(2+) as a cofactor.

The protein resides in the cytoplasm. The catalysed reaction is tRNA(Phe) + L-phenylalanine + ATP = L-phenylalanyl-tRNA(Phe) + AMP + diphosphate + H(+). This is Phenylalanine--tRNA ligase beta subunit from Chlorobium luteolum (strain DSM 273 / BCRC 81028 / 2530) (Pelodictyon luteolum).